The primary structure comprises 344 residues: Dihydroorotase (344 aa).

Residues His13 and His15 each coordinate Zn(2+). Residues 15–17 (HLR) and Asn41 contribute to the substrate site. Zn(2+)-binding residues include Lys98, His135, and His173. Lys98 is subject to N6-carboxylysine. Substrate is bound at residue His135. Leu218 is a substrate binding site. Asp247 contributes to the Zn(2+) binding site. Residue Asp247 is part of the active site. His251 and Ala263 together coordinate substrate.

It belongs to the metallo-dependent hydrolases superfamily. DHOase family. Class II DHOase subfamily. As to quaternary structure, homodimer. Requires Zn(2+) as cofactor.

The enzyme catalyses (S)-dihydroorotate + H2O = N-carbamoyl-L-aspartate + H(+). The protein operates within pyrimidine metabolism; UMP biosynthesis via de novo pathway; (S)-dihydroorotate from bicarbonate: step 3/3. In terms of biological role, catalyzes the reversible cyclization of carbamoyl aspartate to dihydroorotate. The sequence is that of Dihydroorotase from Neisseria meningitidis serogroup C (strain 053442).